Reading from the N-terminus, the 238-residue chain is MAFTFKQFHIDDMNCGMAVGTDSVVLGAWAQLTAAKTVLDIGAGSGLLSLMAAQRSQAHITSVELDTSAAEACQHNFHNSPWANRLTLVNSSIQDFCQQIEYQEYFDHIICNPPYFEQGTQAIQSQRAMARHTDSLSFTALLDAIHVCLAPQGNASLILPMQSMARFNEILAHSQLSLIEITNLISIVGKSANRVLCVLAHKTHPQIAPKSSDITIRELSGQYTQTMVQLIRDFYLKY.

It belongs to the methyltransferase superfamily. tRNA (adenine-N(6)-)-methyltransferase family.

It is found in the cytoplasm. It catalyses the reaction adenosine(37) in tRNA1(Val) + S-adenosyl-L-methionine = N(6)-methyladenosine(37) in tRNA1(Val) + S-adenosyl-L-homocysteine + H(+). In terms of biological role, specifically methylates the adenine in position 37 of tRNA(1)(Val) (anticodon cmo5UAC). This is tRNA1(Val) (adenine(37)-N6)-methyltransferase from Shewanella baltica (strain OS185).